We begin with the raw amino-acid sequence, 215 residues long: NAD(P)H-hydrate epimerase (215 aa).

One can recognise a YjeF N-terminal domain in the interval 10–212 (SRELDDKTIN…DIGIYRGNAF (203 aa)). Position 59–63 (59–63 (NNGGD)) interacts with (6S)-NADPHX. K(+)-binding residues include asparagine 60 and aspartate 122. (6S)-NADPHX contacts are provided by residues 126-132 (GSGLSRN) and aspartate 155. Residue serine 158 participates in K(+) binding.

It belongs to the NnrE/AIBP family. K(+) serves as cofactor.

It catalyses the reaction (6R)-NADHX = (6S)-NADHX. It carries out the reaction (6R)-NADPHX = (6S)-NADPHX. Functionally, catalyzes the epimerization of the S- and R-forms of NAD(P)HX, a damaged form of NAD(P)H that is a result of enzymatic or heat-dependent hydration. This is a prerequisite for the S-specific NAD(P)H-hydrate dehydratase to allow the repair of both epimers of NAD(P)HX. The chain is NAD(P)H-hydrate epimerase from Lentilactobacillus buchneri (strain NRRL B-30929) (Lactobacillus buchneri).